A 121-amino-acid chain; its full sequence is Flagellar hook-basal body complex protein FliE (121 aa).

It belongs to the FliE family.

It localises to the bacterial flagellum basal body. The protein is Flagellar hook-basal body complex protein FliE of Treponema denticola (strain ATCC 35405 / DSM 14222 / CIP 103919 / JCM 8153 / KCTC 15104).